Consider the following 130-residue polypeptide: Small ribosomal subunit protein uS9 (130 aa).

Residues 105–130 form a disordered region; that stretch reads TRDSRMKERKKPGLRGARRAPQFSKR. Over residues 111–130 the composition is skewed to basic residues; sequence KERKKPGLRGARRAPQFSKR.

This sequence belongs to the universal ribosomal protein uS9 family.

The polypeptide is Small ribosomal subunit protein uS9 (Lysinibacillus sphaericus (strain C3-41)).